An 81-amino-acid chain; its full sequence is Cytotoxin 2 (81 aa).

A signal peptide spans 1 to 21 (MKTLLLTLVVVTIVCLDLGYT). 4 disulfides stabilise this stretch: C24/C42, C35/C59, C63/C74, and C75/C80.

This sequence belongs to the three-finger toxin family. Short-chain subfamily. Type IA cytotoxin sub-subfamily. As to quaternary structure, monomer in solution; Homodimer and oligomer in the presence of negatively charged lipids forming a pore with a size ranging between 20 and 30 Angstroms. Expressed by the venom gland.

It is found in the secreted. Its subcellular location is the target cell membrane. Functionally, basic protein that binds to cell membrane and depolarizes cardiomyocytes. It also shows lytic activities, but 2-fold less important than that of CTX-A4. It binds to the integrin alpha-V/beta-3 (ITGAV/ITGB3) with a moderate affinity. It may interact with sulfatides in the cell membrane which induces pore formation and cell internalization and is responsible for cytotoxicity in cardiomyocytes. It may also target the mitochondrial membrane and induce mitochondrial swelling and fragmentation. The sequence is that of Cytotoxin 2 from Naja atra (Chinese cobra).